The following is a 285-amino-acid chain: tRNA U34 carboxymethyltransferase (285 aa).

Carboxy-S-adenosyl-L-methionine-binding positions include K56, W70, K75, G94, 143–144 (VE), Y163, and R278.

It belongs to the class I-like SAM-binding methyltransferase superfamily. CmoB family. As to quaternary structure, homotetramer.

The catalysed reaction is carboxy-S-adenosyl-L-methionine + 5-hydroxyuridine(34) in tRNA = 5-carboxymethoxyuridine(34) in tRNA + S-adenosyl-L-homocysteine + H(+). Its function is as follows. Catalyzes carboxymethyl transfer from carboxy-S-adenosyl-L-methionine (Cx-SAM) to 5-hydroxyuridine (ho5U) to form 5-carboxymethoxyuridine (cmo5U) at position 34 in tRNAs. In Campylobacter hominis (strain ATCC BAA-381 / DSM 21671 / CCUG 45161 / LMG 19568 / NCTC 13146 / CH001A), this protein is tRNA U34 carboxymethyltransferase.